We begin with the raw amino-acid sequence, 445 residues long: Ribosomal protein uS12 methylthiotransferase RimO (445 aa).

In terms of domain architecture, MTTase N-terminal spans 4–119 (YKVGMVSLGC…INEAIMNFIN (116 aa)). [4Fe-4S] cluster contacts are provided by Cys-13, Cys-48, Cys-82, Cys-157, Cys-161, and Cys-164. The 231-residue stretch at 143–373 (TTDKATAYLR…MLLQKELSEE (231 aa)) folds into the Radical SAM core domain. Residues 376 to 441 (KNKLGREYDV…EYDLVGVVCN (66 aa)) enclose the TRAM domain.

It belongs to the methylthiotransferase family. RimO subfamily. [4Fe-4S] cluster is required as a cofactor.

It is found in the cytoplasm. The catalysed reaction is L-aspartate(89)-[ribosomal protein uS12]-hydrogen + (sulfur carrier)-SH + AH2 + 2 S-adenosyl-L-methionine = 3-methylsulfanyl-L-aspartate(89)-[ribosomal protein uS12]-hydrogen + (sulfur carrier)-H + 5'-deoxyadenosine + L-methionine + A + S-adenosyl-L-homocysteine + 2 H(+). Functionally, catalyzes the methylthiolation of an aspartic acid residue of ribosomal protein uS12. In Clostridium perfringens (strain SM101 / Type A), this protein is Ribosomal protein uS12 methylthiotransferase RimO.